The chain runs to 780 residues: Protein phosphatase 1 regulatory subunit 21 (780 aa).

2 coiled-coil regions span residues 1–207 and 556–607; these read MASA…LKTL and ESRE…LKNT. The interval 84 to 104 is disordered; it reads EPRGKKNKKSGESSSQLSQEQ. The span at 95–104 shows a compositional bias: low complexity; sequence ESSSQLSQEQ. The residue at position 652 (threonine 652) is a Phosphothreonine. Positions 693-742 form a coiled coil; the sequence is YAECRALSKRLALAEKSKEALTEEMKLASQNISRLQDELTTTKRSYEDQL. The disordered stretch occupies residues 760–780; sequence REEIDTLKMSSKGNSKKNKSR.

In terms of assembly, component of the FERRY complex, composed of five subunits: TBCK, PPP1R21, FERRY3, CRYZL1 and GATAD1, with a ratio of 1:2:1:2:4 respectively. PPP1R21 serves as a binding hub connecting all five complex subunits to mediate the binding to specific mitochondrial mRNAs. Interacts with the GTP-bound form of RAB5A (via its C-terminal region); linking the mRNP complex onto trafficking endosomes for active mRNA transport. Interacts with PPP1CA.

It localises to the early endosome. Functionally, component of the FERRY complex (Five-subunit Endosomal Rab5 and RNA/ribosome intermediary). The FERRY complex directly interacts with mRNAs and RAB5A, and functions as a RAB5A effector involved in the localization and the distribution of specific mRNAs most likely by mediating their endosomal transport. The complex recruits mRNAs and ribosomes to early endosomes through direct mRNA-interaction. In the complex, PPP1R21 serves as a binding hub connecting all five complex subunits and mediating the binding to mRNA and early endosomes via RAB5A. Putative regulator of protein phosphatase 1 (PP1) activity. May play a role in the endosomal sorting process or in endosome maturation pathway. This chain is Protein phosphatase 1 regulatory subunit 21 (PPP1R21), found in Homo sapiens (Human).